A 368-amino-acid polypeptide reads, in one-letter code: Flap endonuclease 1 (368 aa).

Positions 1–104 (MGIHDLSKVI…GELLKRGARR (104 aa)) are N-domain. Asp-34 serves as a coordination point for Mg(2+). DNA-binding residues include Arg-47 and Arg-70. Asp-86 serves as a coordination point for Mg(2+). The disordered stretch occupies residues 103-123 (RRKEAQANLEEATEQGDTEQM). The tract at residues 122–251 (QMEKFSRRLV…QKAYQLIKEH (130 aa)) is I-domain. Residues Glu-158, Glu-160, Asp-179, and Asp-181 each coordinate Mg(2+). Position 158 (Glu-158) interacts with DNA. The DNA site is built by Gly-229 and Asp-231. Residue Asp-231 participates in Mg(2+) binding. The tract at residues 334 to 342 (QQGRLDSFF) is interaction with PCNA.

The protein belongs to the XPG/RAD2 endonuclease family. FEN1 subfamily. As to quaternary structure, interacts with PCNA. Three molecules of FEN1 bind to one PCNA trimer with each molecule binding to one PCNA monomer. PCNA stimulates the nuclease activity without altering cleavage specificity. The cofactor is Mg(2+). Post-translationally, phosphorylated. Phosphorylation upon DNA damage induces relocalization to the nuclear plasma.

It is found in the nucleus. It localises to the nucleolus. The protein resides in the nucleoplasm. The protein localises to the mitochondrion. Its function is as follows. Structure-specific nuclease with 5'-flap endonuclease and 5'-3' exonuclease activities involved in DNA replication and repair. During DNA replication, cleaves the 5'-overhanging flap structure that is generated by displacement synthesis when DNA polymerase encounters the 5'-end of a downstream Okazaki fragment. It enters the flap from the 5'-end and then tracks to cleave the flap base, leaving a nick for ligation. Also involved in the long patch base excision repair (LP-BER) pathway, by cleaving within the apurinic/apyrimidinic (AP) site-terminated flap. Acts as a genome stabilization factor that prevents flaps from equilibrating into structures that lead to duplications and deletions. Also possesses 5'-3' exonuclease activity on nicked or gapped double-stranded DNA, and exhibits RNase H activity. Also involved in replication and repair of rDNA and in repairing mitochondrial DNA. The sequence is that of Flap endonuclease 1 from Monosiga brevicollis (Choanoflagellate).